A 364-amino-acid chain; its full sequence is Glycine oxidase (364 aa).

Residues 12 to 13 (VI), 32 to 33 (ER), 40 to 41 (AS), 45 to 47 (GGI), and valine 173 contribute to the FAD site. Arginine 302 provides a ligand contact to substrate. 327–333 (HYRNGLV) is an FAD binding site.

This sequence belongs to the DAO family. ThiO subfamily. In terms of assembly, monomer. FAD serves as cofactor.

It catalyses the reaction glycine + O2 + H2O = glyoxylate + H2O2 + NH4(+). The enzyme catalyses sarcosine + O2 + H2O = methylamine + glyoxylate + H2O2. It functions in the pathway cofactor biosynthesis; thiamine diphosphate biosynthesis. Functionally, catalyzes the oxidation of glycine, leading to glyoxyl imine and hydrogen peroxide as primary products; glyoxyl imine is used for the biosynthesis of the thiazole ring of thiamine. Otherwise, glyoxyl imine is spontaneously hydrolyzed in water to produce glyoxylate and ammonia. Can also use sarcosine (N-methylglycine) as substrate. This is Glycine oxidase from Pseudomonas aeruginosa (strain ATCC 15692 / DSM 22644 / CIP 104116 / JCM 14847 / LMG 12228 / 1C / PRS 101 / PAO1).